A 95-amino-acid polypeptide reads, in one-letter code: Aspartyl/glutamyl-tRNA(Asn/Gln) amidotransferase subunit C (95 aa).

This sequence belongs to the GatC family. As to quaternary structure, heterotrimer of A, B and C subunits.

The enzyme catalyses L-glutamyl-tRNA(Gln) + L-glutamine + ATP + H2O = L-glutaminyl-tRNA(Gln) + L-glutamate + ADP + phosphate + H(+). The catalysed reaction is L-aspartyl-tRNA(Asn) + L-glutamine + ATP + H2O = L-asparaginyl-tRNA(Asn) + L-glutamate + ADP + phosphate + 2 H(+). Its function is as follows. Allows the formation of correctly charged Asn-tRNA(Asn) or Gln-tRNA(Gln) through the transamidation of misacylated Asp-tRNA(Asn) or Glu-tRNA(Gln) in organisms which lack either or both of asparaginyl-tRNA or glutaminyl-tRNA synthetases. The reaction takes place in the presence of glutamine and ATP through an activated phospho-Asp-tRNA(Asn) or phospho-Glu-tRNA(Gln). The chain is Aspartyl/glutamyl-tRNA(Asn/Gln) amidotransferase subunit C from Bartonella quintana (strain Toulouse) (Rochalimaea quintana).